The chain runs to 117 residues: Large ribosomal subunit protein bL20 (117 aa).

Belongs to the bacterial ribosomal protein bL20 family.

In terms of biological role, binds directly to 23S ribosomal RNA and is necessary for the in vitro assembly process of the 50S ribosomal subunit. It is not involved in the protein synthesizing functions of that subunit. The chain is Large ribosomal subunit protein bL20 from Rippkaea orientalis (strain PCC 8801 / RF-1) (Cyanothece sp. (strain PCC 8801)).